Here is a 259-residue protein sequence, read N- to C-terminus: Acyl-[acyl-carrier-protein]--UDP-N-acetylglucosamine O-acyltransferase (259 aa).

The protein belongs to the transferase hexapeptide repeat family. LpxA subfamily. In terms of assembly, homotrimer.

It localises to the cytoplasm. The catalysed reaction is a (3R)-hydroxyacyl-[ACP] + UDP-N-acetyl-alpha-D-glucosamine = a UDP-3-O-[(3R)-3-hydroxyacyl]-N-acetyl-alpha-D-glucosamine + holo-[ACP]. It functions in the pathway glycolipid biosynthesis; lipid IV(A) biosynthesis; lipid IV(A) from (3R)-3-hydroxytetradecanoyl-[acyl-carrier-protein] and UDP-N-acetyl-alpha-D-glucosamine: step 1/6. Its function is as follows. Involved in the biosynthesis of lipid A, a phosphorylated glycolipid that anchors the lipopolysaccharide to the outer membrane of the cell. This Psychrobacter arcticus (strain DSM 17307 / VKM B-2377 / 273-4) protein is Acyl-[acyl-carrier-protein]--UDP-N-acetylglucosamine O-acyltransferase.